Reading from the N-terminus, the 145-residue chain is MYPAHLLLLLAVCVSLLGASAIPPLPLNLAQFALVIKCADKGKRPRWHYMDYGCYCGPGGSGTPVDELDRCCKTHDECYAQAEKKGCYPKLTMYSYYCGGDGPYCNSKTECQRFVCDCDVRAADCFARYPYNNKNYNINTSKRCE.

A signal peptide spans 1–21; sequence MYPAHLLLLLAVCVSLLGASA. A propeptide spanning residues 22–27 is cleaved from the precursor; that stretch reads IPPLPL. Intrachain disulfides connect cysteine 38–cysteine 98, cysteine 54–cysteine 144, cysteine 56–cysteine 72, cysteine 71–cysteine 125, cysteine 78–cysteine 118, cysteine 87–cysteine 111, and cysteine 105–cysteine 116. Residues tyrosine 55, glycine 57, and glycine 59 each coordinate Ca(2+). Residue histidine 75 is part of the active site. Aspartate 76 provides a ligand contact to Ca(2+). The active site involves aspartate 119.

The protein belongs to the phospholipase A2 family. Group I subfamily. D49 sub-subfamily. It depends on Ca(2+) as a cofactor.

It localises to the secreted. The catalysed reaction is a 1,2-diacyl-sn-glycero-3-phosphocholine + H2O = a 1-acyl-sn-glycero-3-phosphocholine + a fatty acid + H(+). PLA2 catalyzes the calcium-dependent hydrolysis of the 2-acyl groups in 3-sn-phosphoglycerides. This is Basic phospholipase A2 PC10 from Laticauda laticaudata (Blue-ringed sea krait).